The primary structure comprises 202 residues: uncharacterized protein (202 aa).

The interval valine 178–asparagine 202 is disordered.

This is an uncharacterized protein from Homo sapiens (Human).